An 85-amino-acid polypeptide reads, in one-letter code: MEKLTFLILVATVLLTIHVLVQSDGDKHLKRRPKQYATKRLSALMRGHRQCTPQNVKCEEDDECCSNLECKCSTVPDCNFPKCRP.

Positions 1–23 (MEKLTFLILVATVLLTIHVLVQS) are cleaved as a signal peptide. Positions 24-49 (DGDKHLKRRPKQYATKRLSALMRGHR) are excised as a propeptide. At glutamine 50 the chain carries Pyrrolidone carboxylic acid.

This sequence belongs to the conotoxin O2 superfamily. In terms of processing, contains 4 disulfide bonds. In terms of tissue distribution, expressed by the venom duct.

Its subcellular location is the secreted. This chain is Conotoxin Cap15b, found in Conus capitaneus (Captain cone).